A 200-amino-acid chain; its full sequence is MIGHLRGIIVEKQPPYLLLEVAGVGYEITAPLSTFYHLPEPQEEILLYTHLIVREDAHTLYGFHNDHERRLFRALIKVNGVGPKLALAILSGIGPDEFVHCVLNQNIDQLVRIPGVGRKTAERLVIETKDGLSRWHTNDTPSPEGLRSSNTQPTQDAISALMALGYKPQEAKRAIDAIQKPDLSAETLIRLALKQMVLGT.

The tract at residues 1–64 is domain I; that stretch reads MIGHLRGIIV…EDAHTLYGFH (64 aa). The tract at residues 65-143 is domain II; that stretch reads NDHERRLFRA…RWHTNDTPSP (79 aa). Residues 133–152 form a disordered region; that stretch reads SRWHTNDTPSPEGLRSSNTQ. The segment at 144-148 is flexible linker; it reads EGLRS. A domain III region spans residues 149–200; that stretch reads SNTQPTQDAISALMALGYKPQEAKRAIDAIQKPDLSAETLIRLALKQMVLGT.

This sequence belongs to the RuvA family. Homotetramer. Forms an RuvA(8)-RuvB(12)-Holliday junction (HJ) complex. HJ DNA is sandwiched between 2 RuvA tetramers; dsDNA enters through RuvA and exits via RuvB. An RuvB hexamer assembles on each DNA strand where it exits the tetramer. Each RuvB hexamer is contacted by two RuvA subunits (via domain III) on 2 adjacent RuvB subunits; this complex drives branch migration. In the full resolvosome a probable DNA-RuvA(4)-RuvB(12)-RuvC(2) complex forms which resolves the HJ.

The protein localises to the cytoplasm. The RuvA-RuvB-RuvC complex processes Holliday junction (HJ) DNA during genetic recombination and DNA repair, while the RuvA-RuvB complex plays an important role in the rescue of blocked DNA replication forks via replication fork reversal (RFR). RuvA specifically binds to HJ cruciform DNA, conferring on it an open structure. The RuvB hexamer acts as an ATP-dependent pump, pulling dsDNA into and through the RuvAB complex. HJ branch migration allows RuvC to scan DNA until it finds its consensus sequence, where it cleaves and resolves the cruciform DNA. In Coxiella burnetii (strain CbuK_Q154) (Coxiella burnetii (strain Q154)), this protein is Holliday junction branch migration complex subunit RuvA.